Consider the following 201-residue polypeptide: Dephospho-CoA kinase (201 aa).

Residues Ile4 to Asp201 form the DPCK domain. Residue Ala12–Thr17 participates in ATP binding.

It belongs to the CoaE family.

Its subcellular location is the cytoplasm. The catalysed reaction is 3'-dephospho-CoA + ATP = ADP + CoA + H(+). Its pathway is cofactor biosynthesis; coenzyme A biosynthesis; CoA from (R)-pantothenate: step 5/5. In terms of biological role, catalyzes the phosphorylation of the 3'-hydroxyl group of dephosphocoenzyme A to form coenzyme A. In Streptococcus pneumoniae (strain ATCC BAA-255 / R6), this protein is Dephospho-CoA kinase.